The following is a 263-amino-acid chain: 3-methyl-2-oxobutanoate hydroxymethyltransferase (263 aa).

Asp46 and Asp85 together coordinate Mg(2+). Residues 46–47 (DS), Asp85, and Lys115 contribute to the 3-methyl-2-oxobutanoate site. Residue Glu117 participates in Mg(2+) binding. Residue Glu180 is the Proton acceptor of the active site.

It belongs to the PanB family. In terms of assembly, homodecamer; pentamer of dimers. It depends on Mg(2+) as a cofactor.

Its subcellular location is the cytoplasm. The enzyme catalyses 3-methyl-2-oxobutanoate + (6R)-5,10-methylene-5,6,7,8-tetrahydrofolate + H2O = 2-dehydropantoate + (6S)-5,6,7,8-tetrahydrofolate. It participates in cofactor biosynthesis; (R)-pantothenate biosynthesis; (R)-pantoate from 3-methyl-2-oxobutanoate: step 1/2. In terms of biological role, catalyzes the reversible reaction in which hydroxymethyl group from 5,10-methylenetetrahydrofolate is transferred onto alpha-ketoisovalerate to form ketopantoate. The chain is 3-methyl-2-oxobutanoate hydroxymethyltransferase from Desulforapulum autotrophicum (strain ATCC 43914 / DSM 3382 / VKM B-1955 / HRM2) (Desulfobacterium autotrophicum).